The chain runs to 74 residues: Antimicrobial peptide 2 (74 aa).

A signal peptide spans 1-22 (MEIKYLLTVFLVLLIVSDHCQA). Lysine amide is present on K40. Residues 46-74 (DLDGQIDRSRNFRKRDAELEELLSKLPIY) constitute a propeptide that is removed on maturation.

Expressed by the venom gland.

The protein localises to the secreted. It is found in the target cell membrane. Has antibacterial activity against the Gram-positive bacteria S.aureus (MIC=48 uM), the Gram-negative bacteria E.coli (MIC=120 uM), and the yeast C.albicans (MIC=64 uM). Causes hemolysis on horse erythrocytes. The protein is Antimicrobial peptide 2 of Androctonus amoreuxi (African fattail scorpion).